Here is a 195-residue protein sequence, read N- to C-terminus: Achaete-scute homolog 1b (195 aa).

Positions 66 to 118 constitute a bHLH domain; it reads MAVARRNERERNRVKQVNMGFQTLRQHVPNGAANKKMSKVETLRSAVEYIRAL. The segment at 141–164 is disordered; the sequence is VSNAYSAGPESPHSAYSSDEGSYE.

In terms of assembly, efficient DNA binding requires dimerization with another bHLH protein. In terms of tissue distribution, in the 24 hours embryo, expressed in hindbrain close to the anterior and posterior boundaries of rhombomeres 2-6 and in ventral cells close to the floor plate of most rhombomeres. Also expressed in the telencephalon, diencephalon, tegmentum and spinal cord at sites distinct from those expressing ascl1a. Not expressed in the adenohypophysis.

Its subcellular location is the nucleus. Its function is as follows. Transcriptional regulator. May mediate transcription activation by binding to the E box-containing promoter. Involved in neurogenesis. Involved in maintaining rhombomere boundaries in the hindbrain, probably via up-regulation of delta expression. May mediate transcription activation by binding to the E box-containing promoter. The polypeptide is Achaete-scute homolog 1b (Danio rerio (Zebrafish)).